We begin with the raw amino-acid sequence, 216 residues long: Redox-sensing transcriptional repressor Rex 1 (216 aa).

The segment at residues leucine 16–phenylalanine 55 is a DNA-binding region (H-T-H motif). Glycine 90–glycine 95 lines the NAD(+) pocket.

This sequence belongs to the transcriptional regulatory Rex family. As to quaternary structure, homodimer.

The protein resides in the cytoplasm. Modulates transcription in response to changes in cellular NADH/NAD(+) redox state. In Enterococcus faecalis (strain ATCC 700802 / V583), this protein is Redox-sensing transcriptional repressor Rex 1.